The chain runs to 264 residues: uncharacterized protein (264 aa).

Residues 19–45 adopt a coiled-coil conformation; the sequence is AQEESMEQLKDINTKIDNSEKKISLEN.

This is an uncharacterized protein from Acanthamoeba polyphaga mimivirus (APMV).